A 344-amino-acid chain; its full sequence is tRNA N6-adenosine threonylcarbamoyltransferase (344 aa).

His110 and His114 together coordinate Fe cation. Substrate is bound by residues 132-136, Asp166, Gly179, Asp183, and Asn278; that span reads LVSGG. Asp306 contacts Fe cation.

It belongs to the KAE1 / TsaD family. Fe(2+) is required as a cofactor.

It localises to the cytoplasm. It catalyses the reaction L-threonylcarbamoyladenylate + adenosine(37) in tRNA = N(6)-L-threonylcarbamoyladenosine(37) in tRNA + AMP + H(+). Required for the formation of a threonylcarbamoyl group on adenosine at position 37 (t(6)A37) in tRNAs that read codons beginning with adenine. Is involved in the transfer of the threonylcarbamoyl moiety of threonylcarbamoyl-AMP (TC-AMP) to the N6 group of A37, together with TsaE and TsaB. TsaD likely plays a direct catalytic role in this reaction. This chain is tRNA N6-adenosine threonylcarbamoyltransferase, found in Nocardia farcinica (strain IFM 10152).